Here is a 247-residue protein sequence, read N- to C-terminus: C-X-C motif chemokine 16 (247 aa).

The N-terminal stretch at M1–G26 is a signal peptide. The Extracellular segment spans residues N27 to A198. 2 disulfide bridges follow: C35–C65 and C37–C79. Residues I120–L152 are disordered. Over residues T131–S147 the composition is skewed to low complexity. Residues L199–V219 traverse the membrane as a helical segment. Topologically, residues L220–L247 are cytoplasmic.

The protein belongs to the intercrine alpha (chemokine CxC) family. Glycosylated.

The protein localises to the membrane. Functionally, induces a strong chemotactic response. Induces calcium mobilization. Binds to CXCR6/Bonzo. Also acts as a scavenger receptor on macrophages, which specifically binds to OxLDL (oxidized low density lipoprotein), suggesting that it may be involved in pathophysiology such as atherogenesis. In Rattus norvegicus (Rat), this protein is C-X-C motif chemokine 16 (Cxcl16).